The following is a 113-amino-acid chain: Nucleoid-associated protein Syncc9605_0027 (113 aa).

The protein belongs to the YbaB/EbfC family. As to quaternary structure, homodimer.

The protein localises to the cytoplasm. It localises to the nucleoid. Functionally, binds to DNA and alters its conformation. May be involved in regulation of gene expression, nucleoid organization and DNA protection. The chain is Nucleoid-associated protein Syncc9605_0027 from Synechococcus sp. (strain CC9605).